The primary structure comprises 790 residues: IQ motif and ubiquitin-like domain-containing protein (790 aa).

Residues 1 to 17 are compositionally biased toward polar residues; that stretch reads MSNQPKKYETQNIANST. A disordered region spans residues 1–49; it reads MSNQPKKYETQNIANSTEESDAFDIVTIPVPSEEPQESDQTEEHESGIE. In terms of domain architecture, Ubiquitin-like spans 130–206; sequence ATVKVVLIPV…IQVEIFSTNP (77 aa). The IQ domain maps to 337-366; the sequence is RLKAVIVIQTYYRQWHAKIFVEDLRRQKSL.

Component of the axonemal radial spoke 1 (RS1) complex, at least composed of spoke head proteins RSPH1, RSPH3, RSPH9 and the cilia-specific component RSPH4A or sperm-specific component RSPH6A, spoke stalk proteins RSPH14, DNAJB13, DYDC1, ROPN1L and NME5, and the anchor protein IQUB. Does not appear to be part of radial spoke complexes 2 or 3 (RS2 or RS3). Interacts with CALM1. Interacts with DNAJB13. Interacts with DYNLL2. Interacts with NME5. Interacts with RSPH3. Interacts with RSPH9. Interacts with ZMYND10. Interacts with calmodulin; the interaction occurs in conditions of low but not high calcium.

It localises to the cytoplasm. The protein resides in the cytoskeleton. Its subcellular location is the flagellum axoneme. The protein localises to the cell projection. It is found in the cilium. Functionally, adapter protein that anchors the radial spoke 1 (RS1) complex to the A microtubule of outer doublet microtubules in axonemes. The triple radial spokes (RS1, RS2 and RS3) are required to modulate beating of the sperm flagellum. May play a role in inhibiting signaling via MAPK1/ERK2 and MAPK3/ERK1. Additionally, may play a role in the functioning of cilia. Not required for the functioning of tracheal or ependymal cilia. This Macaca fascicularis (Crab-eating macaque) protein is IQ motif and ubiquitin-like domain-containing protein (IQUB).